A 321-amino-acid chain; its full sequence is MSRPERLQPGVKLRDADKVSRIPVKVVPSERETMLRKPDWLRVKLPASNQRIVDIKQALRKNGLHSVCEEASCPNLAECFNHGTATFMILGAICTRRCPFCDVAHGRPLKPDAEEPVKLAQTIRDMKLKYVVITSVDRDDLRDGGAQHFADCIREIRKLNPEIKIEILVPDFRGRIDAALEILATEPPDVFNHNLETAPKHYRKARPGANYQWSLDLLKKFKEQHPHIPTKSGLMMGLGETNEEIAEVLRDLRAHNVEMLTLGQYLQPSKFHLPVERYVPPAEFDELKDYAEEIGFTHAACGPMVRSSYHADLQAQGKEVK.

[4Fe-4S] cluster-binding residues include C68, C73, C79, C94, C98, C101, and S308. Positions 80 to 297 (FNHGTATFMI…KDYAEEIGFT (218 aa)) constitute a Radical SAM core domain.

The protein belongs to the radical SAM superfamily. Lipoyl synthase family. [4Fe-4S] cluster is required as a cofactor.

It localises to the cytoplasm. The catalysed reaction is [[Fe-S] cluster scaffold protein carrying a second [4Fe-4S](2+) cluster] + N(6)-octanoyl-L-lysyl-[protein] + 2 oxidized [2Fe-2S]-[ferredoxin] + 2 S-adenosyl-L-methionine + 4 H(+) = [[Fe-S] cluster scaffold protein] + N(6)-[(R)-dihydrolipoyl]-L-lysyl-[protein] + 4 Fe(3+) + 2 hydrogen sulfide + 2 5'-deoxyadenosine + 2 L-methionine + 2 reduced [2Fe-2S]-[ferredoxin]. It participates in protein modification; protein lipoylation via endogenous pathway; protein N(6)-(lipoyl)lysine from octanoyl-[acyl-carrier-protein]: step 2/2. Its function is as follows. Catalyzes the radical-mediated insertion of two sulfur atoms into the C-6 and C-8 positions of the octanoyl moiety bound to the lipoyl domains of lipoate-dependent enzymes, thereby converting the octanoylated domains into lipoylated derivatives. This Shewanella loihica (strain ATCC BAA-1088 / PV-4) protein is Lipoyl synthase.